The chain runs to 1221 residues: DNA-directed RNA polymerase subunit beta' (1221 aa).

The Zn(2+) site is built by Cys-60, Cys-62, Cys-75, and Cys-78. Residues Asp-449, Asp-451, and Asp-453 each coordinate Mg(2+). Zn(2+)-binding residues include Cys-821, Cys-896, Cys-903, and Cys-906.

This sequence belongs to the RNA polymerase beta' chain family. In terms of assembly, the RNAP catalytic core consists of 2 alpha, 1 beta, 1 beta' and 1 omega subunit. When a sigma factor is associated with the core the holoenzyme is formed, which can initiate transcription. The cofactor is Mg(2+). Requires Zn(2+) as cofactor.

The catalysed reaction is RNA(n) + a ribonucleoside 5'-triphosphate = RNA(n+1) + diphosphate. Its function is as follows. DNA-dependent RNA polymerase catalyzes the transcription of DNA into RNA using the four ribonucleoside triphosphates as substrates. The protein is DNA-directed RNA polymerase subunit beta' of Lactobacillus delbrueckii subsp. bulgaricus (strain ATCC BAA-365 / Lb-18).